The primary structure comprises 166 residues: Small ribosomal subunit protein uS5 (166 aa).

The S5 DRBM domain occupies 11–74 (LQEKLISVNR…DKARKNMIII (64 aa)).

Belongs to the universal ribosomal protein uS5 family. In terms of assembly, part of the 30S ribosomal subunit. Contacts proteins S4 and S8.

In terms of biological role, with S4 and S12 plays an important role in translational accuracy. Located at the back of the 30S subunit body where it stabilizes the conformation of the head with respect to the body. This is Small ribosomal subunit protein uS5 from Wigglesworthia glossinidia brevipalpis.